Reading from the N-terminus, the 299-residue chain is Nucleotide-binding protein RER_30260 (299 aa).

19-26 provides a ligand contact to ATP; it reads GLSGAGLS. 70–73 is a binding site for GTP; sequence DVRS.

The protein belongs to the RapZ-like family.

Displays ATPase and GTPase activities. This is Nucleotide-binding protein RER_30260 from Rhodococcus erythropolis (strain PR4 / NBRC 100887).